Here is an 86-residue protein sequence, read N- to C-terminus: Toxin Tpa4 (86 aa).

An N-terminal signal peptide occupies residues 1–19 (MNYFVLIAVACLLTAGTES). Residues 21-82 (KDGYPLEYDN…EPIKTSGRCR (62 aa)) enclose the LCN-type CS-alpha/beta domain. 4 disulfide bridges follow: cysteine 31-cysteine 81, cysteine 35-cysteine 57, cysteine 43-cysteine 64, and cysteine 47-cysteine 66. Proline 83 is modified (proline amide).

The protein belongs to the long (4 C-C) scorpion toxin superfamily. Sodium channel inhibitor family. Alpha subfamily. In terms of tissue distribution, expressed by the venom gland.

It is found in the secreted. Alpha toxins bind voltage-independently at site-3 of sodium channels (Nav) and inhibit the inactivation of the activated channels, thereby blocking neuronal transmission. This Tityus pachyurus (Colombian scorpion) protein is Toxin Tpa4.